The sequence spans 355 residues: S-adenosylmethionine:tRNA ribosyltransferase-isomerase (355 aa).

This sequence belongs to the QueA family. In terms of assembly, monomer.

It is found in the cytoplasm. The catalysed reaction is 7-aminomethyl-7-carbaguanosine(34) in tRNA + S-adenosyl-L-methionine = epoxyqueuosine(34) in tRNA + adenine + L-methionine + 2 H(+). It participates in tRNA modification; tRNA-queuosine biosynthesis. Transfers and isomerizes the ribose moiety from AdoMet to the 7-aminomethyl group of 7-deazaguanine (preQ1-tRNA) to give epoxyqueuosine (oQ-tRNA). The chain is S-adenosylmethionine:tRNA ribosyltransferase-isomerase from Burkholderia ambifaria (strain MC40-6).